A 188-amino-acid chain; its full sequence is GMP synthase [glutamine-hydrolyzing] subunit A (188 aa).

The 188-residue stretch at Met1–Leu188 folds into the Glutamine amidotransferase type-1 domain. The Nucleophile role is filled by Cys78. Active-site residues include His165 and Glu167.

Heterodimer composed of a glutamine amidotransferase subunit (A) and a GMP-binding subunit (B).

The enzyme catalyses XMP + L-glutamine + ATP + H2O = GMP + L-glutamate + AMP + diphosphate + 2 H(+). It functions in the pathway purine metabolism; GMP biosynthesis; GMP from XMP (L-Gln route): step 1/1. Its function is as follows. Catalyzes the synthesis of GMP from XMP. This is GMP synthase [glutamine-hydrolyzing] subunit A from Thermococcus kodakarensis (strain ATCC BAA-918 / JCM 12380 / KOD1) (Pyrococcus kodakaraensis (strain KOD1)).